The primary structure comprises 424 residues: Na(+)/H(+) antiporter NhaA (424 aa).

11 helical membrane-spanning segments follow: residues 23–43, 65–85, 102–122, 131–151, 160–180, 183–203, 211–231, 265–285, 303–323, 341–361, and 373–393; these read ILLI…LATL, VHLW…GLEI, LPFI…MFFV, GWAI…ALLG, LFLV…IALF, AKIN…MFAC, LLVY…SGVH, ALHP…NAGV, IAAG…WLAV, AVSM…SLAF, and IGIL…LRLA.

It belongs to the NhaA Na(+)/H(+) (TC 2.A.33) antiporter family.

Its subcellular location is the cell inner membrane. The catalysed reaction is Na(+)(in) + 2 H(+)(out) = Na(+)(out) + 2 H(+)(in). In terms of biological role, na(+)/H(+) antiporter that extrudes sodium in exchange for external protons. This is Na(+)/H(+) antiporter NhaA from Sphingopyxis alaskensis (strain DSM 13593 / LMG 18877 / RB2256) (Sphingomonas alaskensis).